Consider the following 542-residue polypeptide: CTP synthase (542 aa).

Residues M1 to I265 form an amidoligase domain region. S13 contacts CTP. Position 13 (S13) interacts with UTP. S14–I19 lines the ATP pocket. Y54 lines the L-glutamine pocket. Residue D71 participates in ATP binding. Mg(2+) is bound by residues D71 and E139. CTP-binding positions include D146–E148, K186–Q191, and K222. UTP is bound by residues K186–Q191 and K222. The 251-residue stretch at T291–L541 folds into the Glutamine amidotransferase type-1 domain. L-glutamine is bound at residue G353. C380 (nucleophile; for glutamine hydrolysis) is an active-site residue. L-glutamine contacts are provided by residues F381 to Q384, E404, and R469. Active-site residues include H514 and E516.

This sequence belongs to the CTP synthase family. As to quaternary structure, homotetramer.

It carries out the reaction UTP + L-glutamine + ATP + H2O = CTP + L-glutamate + ADP + phosphate + 2 H(+). It catalyses the reaction L-glutamine + H2O = L-glutamate + NH4(+). The enzyme catalyses UTP + NH4(+) + ATP = CTP + ADP + phosphate + 2 H(+). It functions in the pathway pyrimidine metabolism; CTP biosynthesis via de novo pathway; CTP from UDP: step 2/2. Its activity is regulated as follows. Allosterically activated by GTP, when glutamine is the substrate; GTP has no effect on the reaction when ammonia is the substrate. The allosteric effector GTP functions by stabilizing the protein conformation that binds the tetrahedral intermediate(s) formed during glutamine hydrolysis. Inhibited by the product CTP, via allosteric rather than competitive inhibition. In terms of biological role, catalyzes the ATP-dependent amination of UTP to CTP with either L-glutamine or ammonia as the source of nitrogen. Regulates intracellular CTP levels through interactions with the four ribonucleotide triphosphates. The chain is CTP synthase from Brucella melitensis biotype 1 (strain ATCC 23456 / CCUG 17765 / NCTC 10094 / 16M).